The primary structure comprises 225 residues: UPF0173 metal-dependent hydrolase PYRAB05000 (225 aa).

It belongs to the UPF0173 family.

This Pyrococcus abyssi (strain GE5 / Orsay) protein is UPF0173 metal-dependent hydrolase PYRAB05000.